Consider the following 108-residue polypeptide: Peptidyl-prolyl cis-trans isomerase FKBP1B (108 aa).

The PPIase FKBP-type domain maps to 20–108; sequence GQTCVVHYTG…IFGVELLNLE (89 aa).

It belongs to the FKBP-type PPIase family. FKBP1 subfamily. As to quaternary structure, identified in a complex composed of RYR2, FKBP1B, PKA catalytic subunit, PRKAR2A, AKAP6, and the protein phosphatases PP2A and PP1. Interacts directly with RYR2.

It localises to the cytoplasm. Its subcellular location is the sarcoplasmic reticulum. The catalysed reaction is [protein]-peptidylproline (omega=180) = [protein]-peptidylproline (omega=0). Inhibited by both FK506 and rapamycin. Functionally, has the potential to contribute to the immunosuppressive and toxic effects of FK506 and rapamycin. PPIases accelerate the folding of proteins. It catalyzes the cis-trans isomerization of proline imidic peptide bonds in oligopeptides. The chain is Peptidyl-prolyl cis-trans isomerase FKBP1B (FKBP1B) from Oryctolagus cuniculus (Rabbit).